An 819-amino-acid polypeptide reads, in one-letter code: Protein kinase C-binding protein NELL2 (819 aa).

Positions 1-24 (MHAMESRVLLRTFCVILGLGAVWG) are cleaved as a signal peptide. 4 N-linked (GlcNAc...) asparagine glycosylation sites follow: Asn-56, Asn-228, Asn-296, and Asn-301. The region spanning 67 to 231 (PRSIKASTAT…AQCPDLNRTC (165 aa)) is the Laminin G-like domain. Positions 275–334 (RTCTVKGTTYRESESWTDGCKNCTCLNGTIQCETLVCPAPDCPPKSAPAYVDGKCCKECK) constitute a VWFC 1 domain. The 43-residue stretch at 400–442 (GYDFCSEKHTCMENSVCRNLNDRAVCSCRDGFRALREDNAYCE) folds into the EGF-like 1 domain. Intrachain disulfides connect Cys-404-Cys-416, Cys-410-Cys-425, and Cys-427-Cys-441. 3 residues coordinate Ca(2+): Asp-443, Ile-444, and Glu-446. Positions 443–484 (DIDECAEGRHYCRENTMCVNTPGSFMCICKTGYIRIDDYSCT) constitute an EGF-like 2; calcium-binding domain. Intrachain disulfides connect Cys-447/Cys-460, Cys-454/Cys-469, Cys-471/Cys-483, Cys-489/Cys-502, Cys-496/Cys-511, Cys-513/Cys-524, Cys-528/Cys-538, Cys-532/Cys-544, and Cys-546/Cys-555. Asn-462, Thr-463, and Ser-466 together coordinate Ca(2+). In terms of domain architecture, EGF-like 3; calcium-binding spans 485–525 (EHDECLTNQHNCDENALCFNTVGGHNCVCKPGYTGNGTTCK). Asn-520 is a glycosylation site (N-linked (GlcNAc...) asparagine). The EGF-like 4 domain occupies 526 to 556 (AFCKDGCRNGGACIAANVCACPQGFTGPSCE). A glycan (O-linked (GlcNAc...) threonine) is linked at Thr-551. Residues Asp-558, Ile-559, and Glu-561 each coordinate Ca(2+). The EGF-like 5; calcium-binding domain occupies 558–604 (DIDECSEGFVQCDSRANCINLPGWYHCECRDGYHDNGMFAPGGESCE). Intrachain disulfides connect Cys-562/Cys-575, Cys-569/Cys-584, and Cys-586/Cys-603. The Ca(2+) site is built by Asn-577, Leu-578, and Trp-581. Residues Asp-605, Ile-606, and Glu-608 each contribute to the Ca(2+) site. Residues 605 to 640 (DIDECGTGRHSCTNDTICFNLDGGYDCRCPHGKNCT) form the EGF-like 6; calcium-binding domain. 3 disulfides stabilise this stretch: Cys-609-Cys-622, Cys-616-Cys-631, and Cys-633-Cys-639. Asn-618 carries an N-linked (GlcNAc...) asparagine glycan. Ca(2+)-binding residues include Asn-624, Leu-625, and Gly-628. Asn-638 carries an N-linked (GlcNAc...) asparagine glycan. The VWFC 2 domain maps to 701 to 759 (SQCLHQNGETVYNSGDTWVQDCRQCRCLQGEVDCWPLACPEVECEFSVLPENECCPRCV).

Homotrimer. Interacts with NICOL1; this interaction triggers epididymal differentiation. Interacts (via EGF domains) with ROBO3 (via FN domains); binding to ROBO3 induces repulsive guidance cue for commissural axons. As to expression, expressed in brain and testis but not in epididymis. Expressed in regions flanking the commissural axon trajectory, including the ventral horn.

Its subcellular location is the secreted. In terms of biological role, plays multiple roles in neural tissues, regulates neuronal proliferation, survival, differentiation, polarization, as well as axon guidance and synaptic functions. Plays an important role in axon development during neuronal differentiation through the MAPK intracellular signaling pathway. Via binding to its receptor ROBO3, plays a role in axon guidance, functioning as a repulsive axon guidance cue that contributes to commissural axon guidance to the midline. Required for neuron survival through the modulation of MAPK signaling pathways too. Involved in the regulation of hypothalamic GNRH secretion and the control of puberty. Its function is as follows. Epididymal-secreted protein that signals through a ROS1-pathway to regulate the epididymal initial segment (IS) maturation, sperm maturation and male fertility. This Mus musculus (Mouse) protein is Protein kinase C-binding protein NELL2.